The primary structure comprises 166 residues: Cofilin-1 (166 aa).

Residue Ala2 is modified to N-acetylalanine. A phosphoserine mark is found at Ser3 and Ser8. The ADF-H domain maps to 4 to 153 (GVAVSDGVIK…KDRCTLAEKL (150 aa)). Lys13 bears the N6-acetyllysine mark. Position 25 is a phosphothreonine (Thr25). Positions 30 to 34 (KKRKK) match the Nuclear localization signal motif. At Ser41 the chain carries Phosphoserine. Thr63 bears the Phosphothreonine mark. Tyr68 bears the Phosphotyrosine mark. At Lys73 the chain carries N6-acetyllysine. The residue at position 82 (Tyr82) is a Phosphotyrosine. Lys132 is covalently cross-linked (Glycyl lysine isopeptide (Lys-Gly) (interchain with G-Cter in SUMO2)). At Tyr140 the chain carries Phosphotyrosine. Lys144 is subject to N6-acetyllysine. At Ser156 the chain carries Phosphoserine.

Belongs to the actin-binding proteins ADF family. In terms of assembly, can bind G- and F-actin in a 1:1 ratio of cofilin to actin. It is a major component of intranuclear and cytoplasmic actin rods. Interacts with the subcortical maternal complex (SCMC) via interaction with TLE6 and NLRP5. Interacts with C9orf72. Post-translationally, inactivated by phosphorylation on Ser-3. Phosphorylated on Ser-3 in resting cells. Dephosphorylated by PDXP/chronophin; this restores its activity in promoting actin filament depolymerization. The phosphorylation of Ser-24 may prevent recognition of the nuclear localization signal. Phosphorylated via a ARRB1-RAC1-LIMK1-PAK1 cascade upon active ligand stimulation of atypical chemokine receptor ACKR2. Widely distributed in various tissues. Not found in skeletal muscle.

The protein resides in the nucleus matrix. It is found in the cytoplasm. The protein localises to the cytoskeleton. Its subcellular location is the cell projection. It localises to the ruffle membrane. The protein resides in the lamellipodium membrane. It is found in the lamellipodium. The protein localises to the growth cone. Its subcellular location is the axon. Binds to F-actin and exhibits pH-sensitive F-actin depolymerizing activity. In conjunction with the subcortical maternal complex (SCMC), plays an essential role for zygotes to progress beyond the first embryonic cell divisions via regulation of actin dynamics. Required for the centralization of the mitotic spindle and symmetric division of zygotes. Plays a role in the regulation of cell morphology and cytoskeletal organization in epithelial cells. Required for the up-regulation of atypical chemokine receptor ACKR2 from endosomal compartment to cell membrane, increasing its efficiency in chemokine uptake and degradation. Required for neural tube morphogenesis and neural crest cell migration. The chain is Cofilin-1 (Cfl1) from Mus musculus (Mouse).